Reading from the N-terminus, the 342-residue chain is Phosphoribosylformylglycinamidine cyclo-ligase (342 aa).

This sequence belongs to the AIR synthase family.

It is found in the cytoplasm. The enzyme catalyses 2-formamido-N(1)-(5-O-phospho-beta-D-ribosyl)acetamidine + ATP = 5-amino-1-(5-phospho-beta-D-ribosyl)imidazole + ADP + phosphate + H(+). Its pathway is purine metabolism; IMP biosynthesis via de novo pathway; 5-amino-1-(5-phospho-D-ribosyl)imidazole from N(2)-formyl-N(1)-(5-phospho-D-ribosyl)glycinamide: step 2/2. This Gloeothece citriformis (strain PCC 7424) (Cyanothece sp. (strain PCC 7424)) protein is Phosphoribosylformylglycinamidine cyclo-ligase.